Reading from the N-terminus, the 382-residue chain is uncharacterized protein (382 aa).

The chain crosses the membrane as a helical span at residues 1–21 (MKIILVVFVLIFVGVIGFNMI).

Belongs to the membrane fusion protein (MFP) (TC 8.A.1) family.

The protein localises to the membrane. This is an uncharacterized protein from Haemophilus influenzae (strain ATCC 51907 / DSM 11121 / KW20 / Rd).